A 552-amino-acid chain; its full sequence is Carotenoid cleavage dioxygenase 8 homolog A, chloroplastic (552 aa).

A chloroplast-targeting transit peptide spans 1-43 (MATSLTLIATPCTAPRSSSSFALAPRLPPRCSNATAARRRAVR). The tract at residues 32 to 73 (SNATAARRRAVRATTLQSDQEPAGSGDSGATTTKLSASTSVR) is disordered. A compositionally biased stretch (polar residues) spans 59–72 (SGATTTKLSASTSV). Fe cation contacts are provided by His239, His289, His356, and His543.

Belongs to the carotenoid oxygenase family. It depends on Fe(2+) as a cofactor. As to expression, highly expressed in panicles, inflorescences and parenchyma cells of the root stele, and at lower levels in shoot apex, leaf buds and xylem parenchyma cells of the stem.

Its subcellular location is the plastid. The protein localises to the chloroplast. Functionally, may be involved in strigolactones biosynthesis. The polypeptide is Carotenoid cleavage dioxygenase 8 homolog A, chloroplastic (CCD8A) (Oryza sativa subsp. japonica (Rice)).